Consider the following 969-residue polypeptide: Levansucrase (969 aa).

A signal peptide spans 1–52; the sequence is MDITVNSQSNTVAPKQAECKKMRYSIRKVATVGATSALVGTLAFLGATQVKA. Over residues 89–103 the composition is skewed to low complexity; the sequence is SEAVESSVAHSEVAT. The disordered stretch occupies residues 89 to 169; it reads SEAVESSVAH…STASSEAADT (81 aa). Polar residues predominate over residues 106-116; it reads VTETQPSNTTP. Positions 124-166 are enriched in low complexity; it reads SSTVVTSSSDATTPSATVAAVSAPAHTSEAAVEAPTSTASSEA. Positions 286, 287, and 356 each coordinate sucrose. Catalysis depends on D287, which acts as the Nucleophile. D443 is a Ca(2+) binding site. 2 residues coordinate sucrose: R448 and D449. Residues Q473, N512, and D544 each coordinate Ca(2+). E545 is a binding site for sucrose. The active-site Proton donor/acceptor is the E547. R565 is a sucrose binding site. Disordered regions lie at residues 746 to 843 and 860 to 934; these read VKDG…VGDR and IVAT…SEGS. Residues 747–758 are compositionally biased toward basic and acidic residues; it reads KDGKDKKADKPE. Over residues 776 to 789 the composition is skewed to polar residues; it reads KPGTSKPADNNQPS. Positions 872-910 are enriched in basic and acidic residues; the sequence is VKEESVTETEAPKPVKSEEKVQSHGVDKANEVTKSDESS. Polar residues predominate over residues 924-934; the sequence is TPKTPSDSEGS. Residues 938–958 traverse the membrane as a helical segment; sequence ILSILATIFAAIASLALLGYG.

Belongs to the glycosyl hydrolase 68 family.

The protein resides in the cell membrane. Its subcellular location is the cell surface. It catalyses the reaction [6)-beta-D-fructofuranosyl-(2-&gt;](n) alpha-D-glucopyranoside + sucrose = [6)-beta-D-fructofuranosyl-(2-&gt;](n+1) alpha-D-glucopyranoside + D-glucose. Its activity is regulated as follows. Ca(2+) may play an important structural role and promote stability of levansucrase. Its function is as follows. Catalyzes the synthesis of levan, a fructose polymer, by transferring the fructosyl moiety from sucrose to a growing acceptor molecule. Also displays sucrose hydrolase activity. The chain is Levansucrase from Streptococcus salivarius.